The sequence spans 201 residues: FMN-dependent NADH:quinone oxidoreductase (201 aa).

Residues Ser-10, 16 to 18, 95 to 98, and 139 to 142 contribute to the FMN site; these read SQS, MYNF, and TTGG.

This sequence belongs to the azoreductase type 1 family. In terms of assembly, homodimer. It depends on FMN as a cofactor.

The catalysed reaction is 2 a quinone + NADH + H(+) = 2 a 1,4-benzosemiquinone + NAD(+). It catalyses the reaction N,N-dimethyl-1,4-phenylenediamine + anthranilate + 2 NAD(+) = 2-(4-dimethylaminophenyl)diazenylbenzoate + 2 NADH + 2 H(+). In terms of biological role, quinone reductase that provides resistance to thiol-specific stress caused by electrophilic quinones. Also exhibits azoreductase activity. Catalyzes the reductive cleavage of the azo bond in aromatic azo compounds to the corresponding amines. This is FMN-dependent NADH:quinone oxidoreductase from Tolumonas auensis (strain DSM 9187 / NBRC 110442 / TA 4).